The following is a 487-amino-acid chain: Argininosuccinate lyase (487 aa).

It belongs to the lyase 1 family. Argininosuccinate lyase subfamily.

It localises to the cytoplasm. The catalysed reaction is 2-(N(omega)-L-arginino)succinate = fumarate + L-arginine. The protein operates within amino-acid biosynthesis; L-arginine biosynthesis; L-arginine from L-ornithine and carbamoyl phosphate: step 3/3. This chain is Argininosuccinate lyase, found in Natranaerobius thermophilus (strain ATCC BAA-1301 / DSM 18059 / JW/NM-WN-LF).